Reading from the N-terminus, the 113-residue chain is Large ribosomal subunit protein uL22 (113 aa).

This sequence belongs to the universal ribosomal protein uL22 family. As to quaternary structure, part of the 50S ribosomal subunit.

In terms of biological role, this protein binds specifically to 23S rRNA; its binding is stimulated by other ribosomal proteins, e.g. L4, L17, and L20. It is important during the early stages of 50S assembly. It makes multiple contacts with different domains of the 23S rRNA in the assembled 50S subunit and ribosome. The globular domain of the protein is located near the polypeptide exit tunnel on the outside of the subunit, while an extended beta-hairpin is found that lines the wall of the exit tunnel in the center of the 70S ribosome. This is Large ribosomal subunit protein uL22 from Mycoplasmopsis synoviae (strain 53) (Mycoplasma synoviae).